A 331-amino-acid polypeptide reads, in one-letter code: Olfactory receptor 6K3 (331 aa).

The Extracellular portion of the chain corresponds to 1–41 (MCWTMPSPFTGSSTRNMESGNQSTVTEFIFTGFPQLQDGSL). Asn21 is a glycosylation site (N-linked (GlcNAc...) asparagine). A helical membrane pass occupies residues 42 to 62 (LYFFPLLFIYTFIIIDNLLIF). Residues 63–70 (SAVRLDTH) are Cytoplasmic-facing. The chain crosses the membrane as a helical span at residues 71-91 (LHNPMYNFISIFSFLEIWYTT). The Extracellular portion of the chain corresponds to 92-115 (ATIPKMLSNLISEKKAISMTGCIL). Cys113 and Cys205 form a disulfide bridge. A helical membrane pass occupies residues 116 to 136 (QMYFFHSLENSEGILLTTMAI). Residues 137–155 (DRYVAICNPLRYQMIMTPR) lie on the Cytoplasmic side of the membrane. Residues 156-176 (LCAQLSAGSCLFGFLILLPEI) traverse the membrane as a helical segment. Residues 177–212 (VMISTLPFCGPNQIHQIFCDLVPVLSLACTDTSMIL) are Extracellular-facing. The helical transmembrane segment at 213 to 232 (IEDVIHAVTIIITFLIIALS) threads the bilayer. At 233–252 (YVRIVTVILRIPSSEGRQKA) the chain is on the cytoplasmic side. Residues 253 to 273 (FSTCAGHLMVFPIFFGSVSLM) traverse the membrane as a helical segment. The Extracellular portion of the chain corresponds to 274–286 (YLRFSDTYPPVLD). The chain crosses the membrane as a helical span at residues 287-307 (TAIALMFTVLAPFFNPIIYSL). Residues 308 to 331 (RNKDMNNAIKKLFCLQKVLNKPGG) are Cytoplasmic-facing.

The protein belongs to the G-protein coupled receptor 1 family.

Its subcellular location is the cell membrane. Its function is as follows. Odorant receptor. The sequence is that of Olfactory receptor 6K3 (OR6K3) from Homo sapiens (Human).